Here is a 73-residue protein sequence, read N- to C-terminus: UPF0435 protein lmo1707 (73 aa).

It belongs to the UPF0435 family.

This chain is UPF0435 protein lmo1707, found in Listeria monocytogenes serovar 1/2a (strain ATCC BAA-679 / EGD-e).